Here is a 504-residue protein sequence, read N- to C-terminus: Protein FMP42 (504 aa).

The Vacuolar segment spans residues 1–11 (MTSTRTLRYAQ). The helical transmembrane segment at 12-32 (VACACIWCLFSAGIIFGFAAL) threads the bilayer. The Cytoplasmic portion of the chain corresponds to 33-64 (KPILISEGVYHELCDPKDGDRLLCTAQDLKLN). A helical membrane pass occupies residues 65 to 85 (FIFALSATVTNIMALPVGKIL). At 86–91 (DMYGPR) the chain is on the vacuolar side. The helical transmembrane segment at 92 to 112 (VCGIIGSCLLFLASGNFISAK) threads the bilayer. The Cytoplasmic portion of the chain corresponds to 113–119 (HLVSLWD). The helical transmembrane segment at 120 to 140 (PYLVGYTLLAVAGPFVFISCF) threads the bilayer. The Vacuolar portion of the chain corresponds to 141-150 (QLANSFPQRS). Residues 151–171 (GTVLALLTGSFDSSSALFLLY) traverse the membrane as a helical segment. Residues 172 to 186 (RLLYQNWFPTLNVSR) are Cytoplasmic-facing. A helical transmembrane segment spans residues 187–207 (FFTLYLIVPVFILACQLTIMP). Over 208–302 (HSSYKTVNHI…KSAYEQIKSP (95 aa)) the chain is Vacuolar. Phosphoserine occurs at positions 238, 249, and 269. The chain crosses the membrane as a helical span at residues 303-323 (WFYLMLLFALVAMLRINYFIA). The Cytoplasmic segment spans residues 324-344 (TVRTQEEYLLNDPDLALKLNS). Residues 345–365 (IFDMLLPLGGAVSIPFIGLLL) form a helical membrane-spanning segment. Over 366 to 385 (DHTDTLSTLTILFTTSTAIG) the chain is Vacuolar. A helical membrane pass occupies residues 386-406 (VFGLIPNSFTWNLIGIVLLVV). At 407-421 (YRPFYYTVVSDYSSK) the chain is on the cytoplasmic side. The helical transmembrane segment at 422–442 (VFGFDTFGTVYGLLSCICGIF) threads the bilayer. The Vacuolar portion of the chain corresponds to 443–462 (NMSQNLLDKWTHTTFNMNPF). Residues 463–483 (PINLTLVILTVVFSLTLTFYI) traverse the membrane as a helical segment. The Cytoplasmic portion of the chain corresponds to 484–504 (RSQILPKPVNERGLSSNYQTI).

The protein belongs to the SLC43A transporter (TC 2.A.1.44) family.

It is found in the vacuole membrane. This is Protein FMP42 (FMP42) from Saccharomyces cerevisiae (strain ATCC 204508 / S288c) (Baker's yeast).